The sequence spans 443 residues: Glutamyl-tRNA reductase (443 aa).

Substrate-binding positions include 49–52, Ser109, 114–116, and Gln120; these read TCNR and ETQ. Catalysis depends on Cys50, which acts as the Nucleophile. 189–194 is a binding site for NADP(+); it reads GAGDMS.

It belongs to the glutamyl-tRNA reductase family. In terms of assembly, homodimer.

It carries out the reaction (S)-4-amino-5-oxopentanoate + tRNA(Glu) + NADP(+) = L-glutamyl-tRNA(Glu) + NADPH + H(+). It participates in porphyrin-containing compound metabolism; protoporphyrin-IX biosynthesis; 5-aminolevulinate from L-glutamyl-tRNA(Glu): step 1/2. Functionally, catalyzes the NADPH-dependent reduction of glutamyl-tRNA(Glu) to glutamate 1-semialdehyde (GSA). This is Glutamyl-tRNA reductase from Staphylococcus saprophyticus subsp. saprophyticus (strain ATCC 15305 / DSM 20229 / NCIMB 8711 / NCTC 7292 / S-41).